Here is a 362-residue protein sequence, read N- to C-terminus: Transcription factor bHLH128 (362 aa).

Positions 1–16 (MYQSSSSTSSSSQRSS) are enriched in low complexity. Disordered stretches follow at residues 1–23 (MYQS…GGGL), 78–106 (SDST…SNKD), 120–140 (SQQH…YSLA), and 162–184 (LNQP…HSRL). Residues 78 to 96 (SDSTTCGVNNSSDGQKQLG) are compositionally biased toward polar residues. Residues 162–173 (LNQPTSDYSPQG) show a composition bias toward polar residues. Ser-189 is modified (phosphoserine). Residues 289–339 (CATHPRSIAERERRTRISGKLKKLQDLVPNMDKQTSYSDMLDLAVQHIKGL) form the bHLH domain.

Homodimer.

Its subcellular location is the nucleus. This Arabidopsis thaliana (Mouse-ear cress) protein is Transcription factor bHLH128 (BHLH128).